A 101-amino-acid chain; its full sequence is Small ribosomal subunit protein uS14 (101 aa).

This sequence belongs to the universal ribosomal protein uS14 family. As to quaternary structure, part of the 30S ribosomal subunit. Contacts proteins S3 and S10.

Functionally, binds 16S rRNA, required for the assembly of 30S particles and may also be responsible for determining the conformation of the 16S rRNA at the A site. This chain is Small ribosomal subunit protein uS14, found in Paraburkholderia phytofirmans (strain DSM 17436 / LMG 22146 / PsJN) (Burkholderia phytofirmans).